The primary structure comprises 186 residues: Inosine/xanthosine triphosphatase (186 aa).

Residue Gln75 participates in Mg(2+) binding.

The protein belongs to the YjjX NTPase family. In terms of assembly, homodimer. Mg(2+) serves as cofactor. Mn(2+) is required as a cofactor.

The enzyme catalyses XTP + H2O = XDP + phosphate + H(+). The catalysed reaction is ITP + H2O = IDP + phosphate + H(+). Functionally, phosphatase that hydrolyzes non-canonical purine nucleotides such as XTP and ITP to their respective diphosphate derivatives. Probably excludes non-canonical purines from DNA/RNA precursor pool, thus preventing their incorporation into DNA/RNA and avoiding chromosomal lesions. This is Inosine/xanthosine triphosphatase from Shewanella baltica (strain OS195).